Consider the following 2835-residue polypeptide: MTFVRNKEMHNSSVQEDQWPLIGTQQGIWFAEQMMPNPEQFNVAHYVVIQGQIDIELFSNAVAIGLQGVDSLHCHYLESDGSVRQQFYPADEEGQWLESSTFHKPPCQKSRLGKWMKHDLRSGWTFSKKERFRHCLIDVGSSNAPQWFWYQRYHHIDVDGFSVNAISQYICQLYKHWRIGAAKPQEFSAFSDVIQEYQQFLDSAARQQAYDFWQTQAAHLPNVISLTTGSAANTSSSTITHTVPLIGGEWLTRYNPQLLPAELAMAMVFAYLHLHSGQEQVCVGVPFMRRMGNAATCAAGAVVNVLPVALSLHPQMSIIDVAREMNKTIRQVRRHQMYDAEQIQRDLGLVGQPLYGPILNFKPFEAALSLSGVETETHILSAGPIDEIEFSPVLDGQTLSVNITANSTKYSQESLELHAARFVAMVEQIANHPTQPLDLVELIPPSEKQQITLWSVGPQHEHGTEQTVLDVWQQTVESKPNEDALVFKQQRWTFDAFNHLIETRADQLITAGLRQGDIAGVALRRGPESVVTMLAILRAGAIYLPIDLDYPIERIESIVEQARPWCLVVEEDEQNMAYSSISYVPRFIALPELARIHTAPQPKPTISHSDVAYIIFTSGSTGHPKGVMNTHGALLNLLRSHQGSIFSAAIRKLATRRQLPEQAITVRAAHTTSFSFDASWEQVLWMLSGHTMYLYDDEQRKDAYELVQCVAEDNIDALDLPPSLFDQMLDSGLITNDHVPTLVLIGSEAIPQKLWSRVSEFPELLVENFYGPTEFTVDAISASLDADASPVIGRPIAGACVYVLDENLEPVAIGEVGELYLSGAGLAKGYLNQPSMTAERFVANPFAYGKIMYRTGDLVKWRDNGLLDFVGRCDHQIKIRGFRIELGDVESAINAIDGVNTTVVVAEPVGDTHRLLAYCTLEKGAQGESVQPAFTEQRLQSLIAQALPDYMQPANVMILDAFSLNVNGKIDRKALPKYSAGMRSERVAPITQPEQLLCDAITELLGVSDVGMSDDFFNLGGDSISAMSLGTRLRTAGYDLRPKAIFAARQLGMMAGQMVPLQQQQREKQEGIIRPLPMWQWFEETFSITTSYVQSVLVEVESDTQLAHLQASLVQLVANHSVCRLVQKEQQYHIEALQNLDVKNWVESVSVERLDGQRWWTVCLAQRSQSMSISSGQLLRLVMITERSGRKISDLAHHFLIDGVSWRICFRSCRHLTQAQVTGEVAVISEEVTGIHCWSKALYQHLAVAAAQMPFWRAQAQRAVAPIKDPVDKIRMTHWRTPLSHAVTQPLLELPTHQTNLDIEEMLLAAVTGVIARLYGCEEIKVNVESHGREECKEEIDLNQTLGWFTTEYPLIINVPKQGDYRERLREVKQSKRSVKDKGLGYMVLRYLDNPYRDELRTLANTRQPSLLFNYLGRFQSSDGQWSPQQYSGQFADTFAVTLNSERALQHPLELNIFVEESATPRLVLNWSWNAHLFSQQEMVSLSQQIESELLKIQQALQVGDSAELDLSVPADYTEPGITLRQASLLQHHYGKLADVLPALPLQEGLLFQSQLGDKNSSYNSTTRLTFQGQLSEHRVSEALNAVIRRHPQLLARFDSSILGRTVQVMTQVNPSWPLTRYDITNMSGDEQSALIDQLEKQELSRQFDLNDSTHSLLQAQLIFHGDQQSTLLLSAHHLVVDGWSTPILLNDFLSAYAQGVSNLPPVTVGYAHVVSQLTQRDKTVATELWGKVLADVQPSMAFDDIPLSEEVNEHQLWLSKHKTDQLNQCLRHHGLTMSTLMQGLWASILASMTGREEVVFGTPISGRFSRIAGIDEQIGLFSNTVPVRVTLQPHLSLSEQLEAHQAIQIQLLEHDELGLGEIQQLVGGKTLFDTLLVVENYPDHSRWYQQDFSGAKLMAIHNRGYTHYPLTILVLPGEQLHILFEYRDRVGVAKQIVQRFEQMLDEFMVSSDKPFAEWDLRLSGEIELQQRVNQTKTAVERTTLRDLMITQQQRSPHQLALIDSEHRFTYQALAEQVAAIADLLLQQGIKAGDIVAVALPRSATLSLAIYSIIECGAAYLPLDVGYPDERLAYMINDAKPALIITCSSFTSRFEALAALLLLDKLPAPVRAERQNRADGLTPSNAAYLLYTSGSTGNPKGVLVSHQAIVNRLKWMQHQYPLNSEDVVLQKTPCSFDVSVWEFFWPLLEGASLVMAPAEAHKDPEWLLQIIDDYHVTTMHFVPSMLAAFMASIEATHPTGFTVAPSLKQVFCSGEALAKELCHQYARRINAPLHNLYGPTEAAVDVTYYPAYGEALNASVGRSAPIGLPVWNTQVYVLDSFLRAVPIGVPGELYLAGEQLAIGYFNRSALTADRFIANPFTCGERMYRTGDVVRWLACGSIEYLGRSDDQIKIRGQRVELGEIGSALQALPAVKQAVVCAQTLSTHSGMLGADERQIIGYVIAHDMSVTNGEKLRTELSEHLPAHMVPAAIVLLDHYPLSANGKLDKKALPRPNDVAVRVGRNAHPGLETQLVTLFAQVLAVETLFADDDFLTLGGHSLLAMKLAADIRRALNLPVTVGQIMVNPTVEKLASLLLDDDAFNDPTLAGFGEVLPIRAGSGPALFCVNSASGFAWQYTGLPKYLTGHYPIYGLQSPRPGGAMATSETMEEVCDRLLPVLREIQPFGPYHLLGYSFGGIVAQKLAAKLQQQGEEVHFLGLLDTYPPEGQNWDGPMDEEKQYEIEREKEQFLAINELTDIELDEQRLAMFNEITANYEDAVRLLAQAQTSDYQGPAHLFVAQRTVPDGYDIDAHWQSFVGQLIKHQFDCSHEDILAPENVRQIGECLNTLLESKAALKK.

Positions 16 to 452 (EDQWPLIGTQ…IPPSEKQQIT (437 aa)) are condensation 1. The adenylation 1 stretch occupies residues 473–880 (QQTVESKPNE…GRCDHQIKIR (408 aa)). Positions 988-1062 (APITQPEQLL…MMAGQMVPLQ (75 aa)) constitute a Carrier 1 domain. Ser-1023 carries the O-(pantetheine 4'-phosphoryl)serine modification. Condensation regions lie at residues 1081–1499 (WFEE…KIQQ) and 1539–1961 (DVLP…EWDL). Positions 1992-2394 (QQQRSPHQLA…GRSDDQIKIR (403 aa)) are adenylation 2. Positions 2503–2578 (NAHPGLETQL…KLASLLLDDD (76 aa)) constitute a Carrier 2 domain. Ser-2538 is subject to O-(pantetheine 4'-phosphoryl)serine. The interval 2601-2821 (ALFCVNSASG…APENVRQIGE (221 aa)) is thioesterase.

The protein belongs to the NRP synthetase family. Pantetheine 4'-phosphate serves as cofactor.

It carries out the reaction holo-[peptidyl-carrier protein] + L-arginine + ATP = L-arginyl-[peptidyl-carrier protein] + AMP + diphosphate. It catalyses the reaction holo-[peptidyl-carrier protein] + L-serine + ATP = L-seryl-[peptidyl-carrier protein] + AMP + diphosphate. Its pathway is siderophore biosynthesis. In terms of biological role, involved in the synthesis of the siderophore vanchrobactin. Probably adenylates L-arginine via its first adenylation domain and loads it onto its first peptidyl carrier domain via a thioester linkage to the phosphopanthetheine moiety. In addition, may adenylate L-serine via its second adenylation domain and loads it onto its second peptidyl carrier domain via a thioester linkage to the phosphopanthetheine moiety. The thioesterase domain may release vanchrobactin after condensation of the siderophore components. The protein is Vanchrobactin synthetase VabF of Vibrio anguillarum (Listonella anguillarum).